The following is a 1137-amino-acid chain: MSSSRSNNRATCSRSSSARSKHSARVVAQTPMDAQLHAEFEGSQRHFDYSSSVGAANRSGATTSNVSAYLQNMQRGRFVQPFGCLLAVHPETFALLAYSENAAEMLDLTPHAVPTIDQREALAVGTDVRTLFRSHSFVALQKAATFGDVNLLNPILVHARTSGKPFYAIMHRIDVGLVIDLEPVNPVDLPVTATGAIKSYKLAARAIARLQSLPSGNLSLLCDVLVREVSELTGYDRVMAYKFHEDEHGEVIAECKRSDLEPYLGLHYPATDIPQASRFLFMKNKVRMICDCSATPVKIIQDDSLTQPISICGSTLRAPHGCHAQYMASMGSVASLVMSVTINEDEDDDGDTGSDQQPKGRKLWGLMVCHHTSPRFVPFPLRYACEFLLQVFGIQINKEVELAAQAKERHILRTQTLLCDMLLRDAPVGIFTQSPNVMDLVKCDGAALYYQNQLWVLGSTPSEAEIKNIVAWLQEYHDGSTGLSTDSLVEAGYPGAAALGDVVYGMAAIKISSKDFIFWFRSHTAKEIKWGGAKHEPIDADDNGRKMHPRSSFKAFLEVVKWRSVPWEDVEMDAIHSLQLILRGSLQDEDANKNNNAKSIVTAPSDDMKKIQGLLELRTVTNEMVRLIETATAPILAVDITGSINGWNNKAAELTGLPVMEAIGKPLVDLVIDDSVEVVKQILNSALQGIEEQNLQIKLKTFNHQENNGPVILMVNACCSRDLSEKVVGVCFVAQDMTGQNIIMDKYTRIQGDYVAIVKNPSELIPPIFMINDLGSCLEWNEAMQKITGIKREDAVDKLLIGEVFTHHEYGCRVKDHGTLTKLSILMNTVISGQDPEKLLFGFFNTDGKYIESLMTATKRTDAEGKITGALCFLHVASPELQHALQVQKMSEQAAMNSFKELTYIRQELRNPLNGMQFTRNLLEPSDLTEEQRKLLASNVLCQEQLKKILHDTDLESIEQCYTEMSTVDFNLEEALNTVLMQAMPQSKEKQISIDRDWPAEVSCMHLCGDNLRLQQVLADFLACMLQFTQPAEGPIVLQVIPRMENIGSGMQIAHLEFRLVHPAPGVPEALIQEMFRHSPGASREGLGLYISQKLVKTMSGTVQYLRESESSSFIVLVEFPVAQLSTKRCKASTSKF.

Residues 1 to 18 (MSSSRSNNRATCSRSSSA) are compositionally biased toward low complexity. The disordered stretch occupies residues 1-27 (MSSSRSNNRATCSRSSSARSKHSARVV). The 184-residue stretch at 217-400 (NLSLLCDVLV…VFGIQINKEV (184 aa)) folds into the GAF domain. Phytochromobilin is bound at residue C322. PAS domains are found at residues 620–690 (VTNE…LQGI) and 750–824 (IQGD…TKLS). One can recognise a Histidine kinase domain in the interval 904 to 1124 (YIRQELRNPL…IVLVEFPVAQ (221 aa)).

This sequence belongs to the phytochrome family. Homodimer. In terms of processing, contains one covalently linked phytochromobilin chromophore.

Its function is as follows. Regulatory photoreceptor which exists in two forms that are reversibly interconvertible by light: the Pr form that absorbs maximally in the red region of the spectrum and the Pfr form that absorbs maximally in the far-red region. Photoconversion of Pr to Pfr induces an array of morphogenic responses, whereas reconversion of Pfr to Pr cancels the induction of those responses. Pfr controls the expression of a number of nuclear genes including those encoding the small subunit of ribulose-bisphosphate carboxylase, chlorophyll A/B binding protein, protochlorophyllide reductase, rRNA, etc. It also controls the expression of its own gene(s) in a negative feedback fashion. This chain is Phytochrome C (PHYC), found in Oryza sativa subsp. indica (Rice).